The chain runs to 337 residues: Glyceraldehyde-3-phosphate dehydrogenase (337 aa).

NAD(+) contacts are provided by residues R12 to I13, D34, and K79. D-glyceraldehyde 3-phosphate contacts are provided by residues S150 to T152, T181, T210 to G211, and R233. C151 functions as the Nucleophile in the catalytic mechanism. N315 is a binding site for NAD(+).

The protein belongs to the glyceraldehyde-3-phosphate dehydrogenase family. In terms of assembly, homotetramer.

Its subcellular location is the cytoplasm. It catalyses the reaction D-glyceraldehyde 3-phosphate + phosphate + NAD(+) = (2R)-3-phospho-glyceroyl phosphate + NADH + H(+). It participates in carbohydrate degradation; glycolysis; pyruvate from D-glyceraldehyde 3-phosphate: step 1/5. This is Glyceraldehyde-3-phosphate dehydrogenase (GPD) from Schizophyllum commune (Split gill fungus).